Reading from the N-terminus, the 735-residue chain is 1,4-alpha-glucan branching enzyme GlgB 1 (735 aa).

The Nucleophile role is filled by Asp-418. Residue Glu-471 is the Proton donor of the active site.

It belongs to the glycosyl hydrolase 13 family. GlgB subfamily. As to quaternary structure, monomer.

The catalysed reaction is Transfers a segment of a (1-&gt;4)-alpha-D-glucan chain to a primary hydroxy group in a similar glucan chain.. Its pathway is glycan biosynthesis; glycogen biosynthesis. Its function is as follows. Catalyzes the formation of the alpha-1,6-glucosidic linkages in glycogen by scission of a 1,4-alpha-linked oligosaccharide from growing alpha-1,4-glucan chains and the subsequent attachment of the oligosaccharide to the alpha-1,6 position. This Rhizobium etli (strain ATCC 51251 / DSM 11541 / JCM 21823 / NBRC 15573 / CFN 42) protein is 1,4-alpha-glucan branching enzyme GlgB 1.